The sequence spans 637 residues: 1-deoxy-D-xylulose-5-phosphate synthase (637 aa).

Thiamine diphosphate is bound by residues H72 and G113 to A115. Residue D144 participates in Mg(2+) binding. Thiamine diphosphate is bound by residues G145 to A146, N174, Y287, and E370. N174 is a binding site for Mg(2+).

Belongs to the transketolase family. DXPS subfamily. Homodimer. It depends on Mg(2+) as a cofactor. The cofactor is thiamine diphosphate.

The enzyme catalyses D-glyceraldehyde 3-phosphate + pyruvate + H(+) = 1-deoxy-D-xylulose 5-phosphate + CO2. The protein operates within metabolic intermediate biosynthesis; 1-deoxy-D-xylulose 5-phosphate biosynthesis; 1-deoxy-D-xylulose 5-phosphate from D-glyceraldehyde 3-phosphate and pyruvate: step 1/1. Functionally, catalyzes the acyloin condensation reaction between C atoms 2 and 3 of pyruvate and glyceraldehyde 3-phosphate to yield 1-deoxy-D-xylulose-5-phosphate (DXP). This chain is 1-deoxy-D-xylulose-5-phosphate synthase, found in Prochlorococcus marinus subsp. pastoris (strain CCMP1986 / NIES-2087 / MED4).